The primary structure comprises 316 residues: Melanocyte-stimulating hormone receptor (316 aa).

The Extracellular portion of the chain corresponds to 1-37; that stretch reads MPMQGAQRKLLGSLNSTPTATSNLGLAANHTGAPCLE. N-linked (GlcNAc...) asparagine glycosylation occurs at N29. A helical membrane pass occupies residues 38–63; that stretch reads VSIPDGLFLSLGLVSLVENVLVVAAI. Residues 64–72 lie on the Cytoplasmic side of the membrane; that stretch reads AKNRNLHSS. The chain crosses the membrane as a helical span at residues 73 to 93; it reads MYCFICCLALSDLLVSGSNML. At 94-118 the chain is on the extracellular side; it reads ETAVILLLETGALATRTSVVQQLHN. Residues 119-140 traverse the membrane as a helical segment; sequence TINVLTCSSMLCSLCFLGAIAV. Residues 141 to 163 are Cytoplasmic-facing; sequence DRYISIFYALRYHSIMTLPRAQR. A helical membrane pass occupies residues 164-183; that stretch reads AIAAIWVASVLSSTLFITYY. Over 184-191 the chain is Extracellular; it reads DHAAVLLC. A helical transmembrane segment spans residues 192–211; sequence LVVFFLAMLVLMAVLYVHML. Residues 212–240 lie on the Cytoplasmic side of the membrane; that stretch reads ARACQHAHGIIRLHKRQTPAHQAFGLRGA. A helical membrane pass occupies residues 241–266; the sequence is ATLTILLGIFFLCWGPFFLHLTLVVF. At 267–279 the chain is on the extracellular side; that stretch reads CPQHLTCSCIFKN. The chain crosses the membrane as a helical span at residues 280–300; it reads FKVFLTLIICNTIIDPLIYAF. At 301–316 the chain is on the cytoplasmic side; sequence RSQELRRTLKEVLCSW. C314 carries the S-palmitoyl cysteine lipid modification.

This sequence belongs to the G-protein coupled receptor 1 family. In terms of assembly, interacts with MGRN1, but does not undergo MGRN1-mediated ubiquitination; this interaction competes with GNAS-binding and thus inhibits agonist-induced cAMP production. Interacts with OPN3; the interaction results in a decrease in MC1R-mediated cAMP signaling and ultimately a decrease in melanin production in melanocytes.

The protein resides in the cell membrane. In terms of biological role, receptor for MSH (alpha, beta and gamma) and ACTH. The activity of this receptor is mediated by G proteins which activate adenylate cyclase. Mediates melanogenesis, the production of eumelanin (black/brown) and phaeomelanin (red/yellow), via regulation of cAMP signaling in melanocytes. In Saguinus geoffroyi (Geoffroy's tamarin), this protein is Melanocyte-stimulating hormone receptor (MC1R).